Consider the following 742-residue polypeptide: MEEGFRDRAAFIRGAKDIAKEVKKHAAKKVVKGLDRVQDEYSRRSYSRFEEEDDDDDFPAPSDSYYRGEGTQDEEEGGASSDATEGHDEDDEIYEGEYQGIPRAESGGKGERMADGAPLAGVRGGLSDGEGPPGGRGEAQRRKEREELAQQYEAILRECGHGRFQWTLYFVLGLALMADGVEVFVVGFVLPSAEKDMCLSDSNKGMLGLIVYLGMMVGAFLWGGLADRLGRRQCLLISLSVNSVFAFFSSFVQGYGTFLFCRLLSGVGIGGSIPIVFSYFSEFLAQEKRGEHLSWLCMFWMIGGVYAAAMAWAIIPHYGWSFQMGSAYQFHSWRVFVLVCAFPSVFAIGALTTQPESPRFFLENGKHDEAWMVLKQVHDTNMRAKGHPERVFSVTHIKTIHQEDELIEIQSDTGTWYQRWGVRALSLGGQVWGNFLSCFGPEYRRITLMMMGVWFTMSFSYYGLTVWFPDMIRHLQAVDYASRTKVFPGERVEHVTFNFTLENQIHRGGQYFNDKFIGLRLKSVSFEDSLFEECYFEDVTSSNTFFRNCTFINTVFYNTDLFEYKFVNSRLVNSTFLHNKEGCPLDVTGTGEGAYMVYFVSFLGTLAVLPGNIVSALLMDKIGRLRMLAGSSVMSCVSCFFLSFGNSESAMIALLCLFGGVSIASWNALDVLTVGLYPSDKRTTAFGFLNALCKLAAVLGISIFTSFVGITKAAPIPFASAALALGSSLALKLPETRGQVLQ.

The interaction with SYT1 stretch occupies residues 1–57 (MEEGFRDRAAFIRGAKDIAKEVKKHAAKKVVKGLDRVQDEYSRRSYSRFEEEDDDDD). Residues 1 to 169 (MEEGFRDRAA…GHGRFQWTLY (169 aa)) lie on the Cytoplasmic side of the membrane. A compositionally biased stretch (basic and acidic residues) spans 33–49 (GLDRVQDEYSRRSYSRF). The segment at 33–144 (GLDRVQDEYS…GRGEAQRRKE (112 aa)) is disordered. 2 positions are modified to phosphoserine: Ser-80 and Ser-81. Phosphothreonine is present on Thr-84. Residues 122 to 137 (VRGGLSDGEGPPGGRG) are compositionally biased toward gly residues. Ser-127 is subject to Phosphoserine. A helical membrane pass occupies residues 170-190 (FVLGLALMADGVEVFVVGFVL). The Extracellular portion of the chain corresponds to 191–205 (PSAEKDMCLSDSNKG). A helical transmembrane segment spans residues 206–226 (MLGLIVYLGMMVGAFLWGGLA). The Cytoplasmic segment spans residues 227–233 (DRLGRRQ). A helical membrane pass occupies residues 234 to 254 (CLLISLSVNSVFAFFSSFVQG). Topologically, residues 255–262 (YGTFLFCR) are extracellular. The chain crosses the membrane as a helical span at residues 263 to 283 (LLSGVGIGGSIPIVFSYFSEF). Over 284 to 294 (LAQEKRGEHLS) the chain is Cytoplasmic. The chain crosses the membrane as a helical span at residues 295–315 (WLCMFWMIGGVYAAAMAWAII). The Extracellular segment spans residues 316–334 (PHYGWSFQMGSAYQFHSWR). Residues 335 to 355 (VFVLVCAFPSVFAIGALTTQP) traverse the membrane as a helical segment. Topologically, residues 356 to 447 (ESPRFFLENG…CFGPEYRRIT (92 aa)) are cytoplasmic. Position 393 is a phosphoserine (Ser-393). Residues 448-468 (LMMMGVWFTMSFSYYGLTVWF) traverse the membrane as a helical segment. The Extracellular portion of the chain corresponds to 469–598 (PDMIRHLQAV…GTGEGAYMVY (130 aa)). Tyr-480 carries the phosphotyrosine modification. N-linked (GlcNAc...) asparagine glycans are attached at residues Asn-498, Asn-548, and Asn-573. The chain crosses the membrane as a helical span at residues 599–619 (FVSFLGTLAVLPGNIVSALLM). At 620–626 (DKIGRLR) the chain is on the cytoplasmic side. Residues 627–647 (MLAGSSVMSCVSCFFLSFGNS) traverse the membrane as a helical segment. The Extracellular portion of the chain corresponds to 648–651 (ESAM). A helical membrane pass occupies residues 652–672 (IALLCLFGGVSIASWNALDVL). The Cytoplasmic segment spans residues 673–690 (TVGLYPSDKRTTAFGFLN). A helical membrane pass occupies residues 691–711 (ALCKLAAVLGISIFTSFVGIT). Residue Lys-712 is a topological domain, extracellular. The chain crosses the membrane as a helical span at residues 713–733 (AAPIPFASAALALGSSLALKL). Over 734 to 742 (PETRGQVLQ) the chain is Cytoplasmic.

The protein belongs to the major facilitator superfamily. Interacts with SYT1/synaptotagmin-1 in a calcium-dependent manner. Binds the adapter protein complex AP-2. Phosphorylation by CK1 of the N-terminal cytoplasmic domain regulates interaction with SYT1. In terms of processing, N-glycosylated.

The protein localises to the presynapse. It localises to the cytoplasmic vesicle. Its subcellular location is the secretory vesicle. It is found in the synaptic vesicle membrane. In terms of biological role, plays a role in the control of regulated secretion in neural and endocrine cells, enhancing selectively low-frequency neurotransmission. Positively regulates vesicle fusion by maintaining the readily releasable pool of secretory vesicles. This chain is Synaptic vesicle glycoprotein 2A (SV2A), found in Macaca fascicularis (Crab-eating macaque).